Reading from the N-terminus, the 932-residue chain is Lon protease homolog 2, peroxisomal (932 aa).

Positions Leu-11 to Asn-260 constitute a Lon N-terminal domain. The interval Arg-298–Asp-328 is disordered. The span at Asn-317–Asp-328 shows a compositional bias: basic and acidic residues. Residue Gly-486–Thr-493 participates in ATP binding. The 188-residue stretch at His-729–Asp-916 folds into the Lon proteolytic domain. Active-site residues include Ser-822 and Lys-865. Positions Ser-930–Leu-932 match the Microbody targeting signal motif.

This sequence belongs to the peptidase S16 family.

The protein resides in the peroxisome matrix. The catalysed reaction is Hydrolysis of proteins in presence of ATP.. Its function is as follows. ATP-dependent serine protease that mediates the selective degradation of misfolded and unassembled polypeptides in the peroxisomal matrix. Necessary for type 2 peroxisome targeting signal (PTS2)-containing protein processing and facilitates peroxisome matrix protein import. This chain is Lon protease homolog 2, peroxisomal, found in Emericella nidulans (strain FGSC A4 / ATCC 38163 / CBS 112.46 / NRRL 194 / M139) (Aspergillus nidulans).